The sequence spans 360 residues: Peptide chain release factor 1 (360 aa).

Gln237 carries the N5-methylglutamine modification.

This sequence belongs to the prokaryotic/mitochondrial release factor family. Methylated by PrmC. Methylation increases the termination efficiency of RF1.

It is found in the cytoplasm. In terms of biological role, peptide chain release factor 1 directs the termination of translation in response to the peptide chain termination codons UAG and UAA. In Pseudomonas putida (strain W619), this protein is Peptide chain release factor 1.